The following is a 467-amino-acid chain: MAP kinase-interacting serine/threonine-protein kinase 2 (467 aa).

One can recognise a Protein kinase domain in the interval 83-367 (QLQQEILGEG…AAQVLQHPWV (285 aa)). ATP is bound by residues 89 to 97 (LGEGAYAKV) and Lys112. The active-site Proton acceptor is Asp204. 3 residues coordinate Zn(2+): Cys298, Cys310, and Cys313. Positions 432-467 (MQLSPPSESKLAKRRQQGSKGGISPPSLAPLLIVSD) are disordered.

The protein belongs to the protein kinase superfamily. CAMK Ser/Thr protein kinase family. Requires Mg(2+) as cofactor. Zn(2+) is required as a cofactor.

It catalyses the reaction L-seryl-[protein] + ATP = O-phospho-L-seryl-[protein] + ADP + H(+). The enzyme catalyses L-threonyl-[protein] + ATP = O-phospho-L-threonyl-[protein] + ADP + H(+). In terms of biological role, may play a role in the response to environmental stress and cytokines. Appears to regulate translation by phosphorylating EIF4E, thus increasing the affinity of this protein for the 7-methylguanosine-containing mRNA cap. The sequence is that of MAP kinase-interacting serine/threonine-protein kinase 2 (mknk2) from Xenopus laevis (African clawed frog).